Consider the following 354-residue polypeptide: Hydrophobic dipeptide epimerase (354 aa).

Substrate contacts are provided by residues threonine 134, lysine 159, and 159–161 (KIK). Mg(2+) is bound at residue aspartate 189. Asparagine 191 serves as a coordination point for substrate. Glutamate 215 and aspartate 240 together coordinate Mg(2+). Substrate contacts are provided by residues lysine 264, 292–295 (CMAE), and 318–320 (DLD).

Belongs to the mandelate racemase/muconate lactonizing enzyme family. Requires Mg(2+) as cofactor.

Its function is as follows. Catalyzes the epimerization of L-Ile-L-Tyr to L-Ile-D-Tyr (in vitro). Catalyzes the epimerization of dipeptides, with a preference for substrates with a hydrophobic or basic amino acid in the first position, followed by an aromatic residue in the second position. Has epimerase activity with L-Ile-L-Tyr, L-Val-L-Tyr and L-Arg-L-Tyr (in vitro). The polypeptide is Hydrophobic dipeptide epimerase (Enterococcus faecalis (strain ATCC 700802 / V583)).